The chain runs to 383 residues: MGLGPVFLLLAGIFPFAPPGAAAEPHSLRYNLTVLSWDGSVQSGFLTEVHLDGQPFLRCDRQKCRAKPQGQWAEDVLGNKTWDRETRDLTGNGKDLRMTLAHIKDQKEGLHSLQEIRVCEIHEDNSTRSSQHFYYDGELFLSQNLETKEWTMPQSSRAQTLAMNVRNFLKEDAMKTKTHYHAMHADCLQELRRYLKSGVVLRRTVPPMVNVTRSEASEGNITVTCRASGFYPWNITLSWRQDGVSLSHDTQQWGDVLPDGNGTYQTWVATRICQGEEQRFTCYMEHSGNHSTHPVPSGKVLVLQSHWQTFHVSAVAAAAIFVIIIFYVRCCKKKTSAAEGPELVSLQVLDQHPVGTSDHRDATQLGFQPLMSDLGSTGSTEGA.

A signal peptide spans 1-23 (MGLGPVFLLLAGIFPFAPPGAAA). Topologically, residues 24-307 (EPHSLRYNLT…GKVLVLQSHW (284 aa)) are extracellular. N-linked (GlcNAc...) asparagine glycosylation is present at Asn31. A disulfide bond links Cys59 and Cys64. N-linked (GlcNAc...) asparagine glycosylation occurs at Asn79. Cys119 and Cys187 form a disulfide bridge. One can recognise an Ig-like C1-type domain in the interval 207–296 (PMVNVTRSEA…SGNHSTHPVP (90 aa)). 3 N-linked (GlcNAc...) asparagine glycosylation sites follow: Asn210, Asn220, and Asn261. Cysteines 225 and 282 form a disulfide. Residues 308-328 (QTFHVSAVAAAAIFVIIIFYV) form a helical membrane-spanning segment. At 329–383 (RCCKKKTSAAEGPELVSLQVLDQHPVGTSDHRDATQLGFQPLMSDLGSTGSTEGA) the chain is on the cytoplasmic side. Residues Cys330 and Cys331 are each lipidated (S-palmitoyl cysteine).

This sequence belongs to the MHC class I family. MIC subfamily. In terms of assembly, unlike classical MHC class I molecules, does not form a heterodimer with beta-2-microglobulin. Binds as a monomer to a KLRK1/NKG2D homodimer. KLRK1 forms a complex with HCST/DAP10 in which KLRK1 binds MICA while HCST acts as an adapter molecule which enables signal transduction. Interacts with PDIA6 on the surface of tumor cells, leading to disulfide bond reduction which is required for release of MICA from tumor cells. As to quaternary structure, (Microbial infection) Interacts with human cytomegalovirus/HHV-5 protein UL142. N-glycosylated. Glycosylation is not essential for interaction with KLRK1/NKG2D but enhances complex formation. In terms of processing, proteolytically cleaved and released from the cell surface of tumor cells which impairs KLRK1/NKG2D expression and T-cell activation. Post-translationally, palmitoylated on cysteine residues in the cytoplasmic tail leading to its association with membrane microdomains enriched in cholesterol. N-glycosylation is necessary for cell surface expression. In terms of processing, (Microbial infection) Ubiquitinated by human herpesvirus 8 protein K5, leading to degradation. As to expression, widely expressed with the exception of the central nervous system where it is absent. Expressed predominantly in gastric epithelium and also in monocytes, keratinocytes, endothelial cells, fibroblasts and in the outer layer of Hassal's corpuscles within the medulla of normal thymus. In skin, expressed mainly in the keratin layers, basal cells, ducts and follicles. Also expressed in many, but not all, epithelial tumors of lung, breast, kidney, ovary, prostate and colon. In thyomas, overexpressed in cortical and medullar epithelial cells. Tumors expressing MICA display increased levels of gamma delta T-cells.

The protein localises to the cell membrane. Its subcellular location is the cytoplasm. In terms of biological role, widely expressed membrane-bound protein which acts as a ligand to stimulate an activating receptor KLRK1/NKG2D, expressed on the surface of essentially all human natural killer (NK), gammadelta T and CD8 alphabeta T-cells. Up-regulated in stressed conditions, such as viral and bacterial infections or DNA damage response, serves as signal of cellular stress, and engagement of KLRK1/NKG2D by MICA triggers NK-cells resulting in a range of immune effector functions, such as cytotoxicity and cytokine production. This chain is MHC class I polypeptide-related sequence A, found in Homo sapiens (Human).